The chain runs to 463 residues: uncharacterized protein (463 aa).

This is an uncharacterized protein from Lepidoptera (butterflies and moths).